We begin with the raw amino-acid sequence, 579 residues long: Isocitrate dehydrogenase kinase/phosphatase (579 aa).

ATP contacts are provided by residues 324–330 (ADGTPGM) and Lys-345. Asp-380 is an active-site residue.

This sequence belongs to the AceK family.

It is found in the cytoplasm. The catalysed reaction is L-seryl-[isocitrate dehydrogenase] + ATP = O-phospho-L-seryl-[isocitrate dehydrogenase] + ADP + H(+). In terms of biological role, bifunctional enzyme which can phosphorylate or dephosphorylate isocitrate dehydrogenase (IDH) on a specific serine residue. This is a regulatory mechanism which enables bacteria to bypass the Krebs cycle via the glyoxylate shunt in response to the source of carbon. When bacteria are grown on glucose, IDH is fully active and unphosphorylated, but when grown on acetate or ethanol, the activity of IDH declines drastically concomitant with its phosphorylation. The chain is Isocitrate dehydrogenase kinase/phosphatase from Xanthomonas axonopodis pv. citri (strain 306).